A 169-amino-acid polypeptide reads, in one-letter code: S-ribosylhomocysteine lyase (169 aa).

Residues histidine 54, histidine 58, and cysteine 129 each coordinate Fe cation.

Belongs to the LuxS family. As to quaternary structure, homodimer. It depends on Fe cation as a cofactor.

It carries out the reaction S-(5-deoxy-D-ribos-5-yl)-L-homocysteine = (S)-4,5-dihydroxypentane-2,3-dione + L-homocysteine. Its function is as follows. Involved in the synthesis of autoinducer 2 (AI-2) which is secreted by bacteria and is used to communicate both the cell density and the metabolic potential of the environment. The regulation of gene expression in response to changes in cell density is called quorum sensing. Catalyzes the transformation of S-ribosylhomocysteine (RHC) to homocysteine (HC) and 4,5-dihydroxy-2,3-pentadione (DPD). The sequence is that of S-ribosylhomocysteine lyase from Glaesserella parasuis serovar 5 (strain SH0165) (Haemophilus parasuis).